The primary structure comprises 554 residues: DM7 family protein GG17593 (554 aa).

The protein belongs to the DM7 family.

The chain is DM7 family protein GG17593 from Drosophila erecta (Fruit fly).